A 439-amino-acid polypeptide reads, in one-letter code: Rho GTPase-activating protein 1 (439 aa).

At Met-1 the chain carries N-acetylmethionine. Over residues 28–48 the composition is skewed to basic and acidic residues; the sequence is IDEKNWPSDEMPDFPKSDDSK. The interval 28 to 52 is disordered; that stretch reads IDEKNWPSDEMPDFPKSDDSKSSSP. Phosphoserine is present on residues Ser-44, Ser-47, Ser-50, and Ser-51. One can recognise a CRAL-TRIO domain in the interval 63–218; the sequence is PYYDIARHQI…QVLKYDDFLK (156 aa). Tyr-65 is modified (phosphotyrosine). At Lys-80 the chain carries N6-acetyllysine. An SH3-binding motif is present at residues 228-238; sequence PKPMPPRPPLP. The 188-residue stretch at 244–431 folds into the Rho-GAP domain; that stretch reads VSLQHLQEKN…FLLDHQGELF (188 aa).

Found in a complex with XPO7, EIF4A1, ARHGAP1, VPS26A, VPS29, VPS35 and SFN. Interacts with BNIPL. In terms of tissue distribution, ubiquitous.

The protein localises to the cytoplasm. Its function is as follows. GTPase activator for the Rho, Rac and Cdc42 proteins, converting them to the putatively inactive GDP-bound state. Cdc42 seems to be the preferred substrate. This chain is Rho GTPase-activating protein 1 (ARHGAP1), found in Homo sapiens (Human).